A 382-amino-acid polypeptide reads, in one-letter code: Pyrimidine monooxygenase RutA (382 aa).

FMN contacts are provided by residues 68-69 (IK), asparagine 134, glutamate 143, 159-160 (RY), and serine 209.

Belongs to the NtaA/SnaA/DszA monooxygenase family. RutA subfamily.

The catalysed reaction is uracil + FMNH2 + NADH + O2 = (Z)-3-ureidoacrylate + FMN + NAD(+) + H2O + H(+). It catalyses the reaction thymine + FMNH2 + NADH + O2 = (Z)-2-methylureidoacrylate + FMN + NAD(+) + H2O + H(+). Its function is as follows. Catalyzes the pyrimidine ring opening between N-3 and C-4 by an unusual flavin hydroperoxide-catalyzed mechanism, adding oxygen atoms in the process to yield ureidoacrylate peracid, that immediately reacts with FMN forming ureidoacrylate and FMN-N(5)-oxide. The FMN-N(5)-oxide reacts spontaneously with NADH to produce FMN. Requires the flavin reductase RutF to regenerate FMN in vivo. The polypeptide is Pyrimidine monooxygenase RutA (Escherichia coli (strain SE11)).